Consider the following 86-residue polypeptide: Actinorhodin polyketide synthase acyl carrier protein (86 aa).

Positions 4-82 (LLTTDDLRRA…ELLDLINGAL (79 aa)) constitute a Carrier domain. The residue at position 42 (Ser-42) is an O-(pantetheine 4'-phosphoryl)serine.

In terms of processing, 4'-phosphopantetheine is transferred from CoA to a specific serine of the apo-ACP-like protein.

It participates in antibiotic biosynthesis; actinorhodin biosynthesis. In terms of biological role, acyl carrier protein. In Streptomyces coelicolor (strain ATCC BAA-471 / A3(2) / M145), this protein is Actinorhodin polyketide synthase acyl carrier protein.